The chain runs to 46 residues: Iota-conotoxin-like R11.17 (46 aa).

2 positions are modified to 4-hydroxyproline: Pro2 and Pro11. 4 disulfides stabilise this stretch: Cys5-Cys19, Cys12-Cys22, Cys18-Cys27, and Cys21-Cys38. Residue Pro29 is modified to 4-hydroxyproline. Phe44 bears the D-phenylalanine mark.

Belongs to the conotoxin I1 superfamily. As to expression, expressed by the venom duct.

It localises to the secreted. Functionally, iota-conotoxins bind to voltage-gated sodium channels (Nav) and act as agonists by shifting the voltage-dependence of activation to more hyperpolarized levels. Produces general excitatory symptoms. The polypeptide is Iota-conotoxin-like R11.17 (Conus radiatus (Rayed cone)).